The following is a 194-amino-acid chain: 2,4-dinitrotoluene dioxygenase system, small oxygenase component (194 aa).

Belongs to the bacterial ring-hydroxylating dioxygenase beta subunit family. As to quaternary structure, the 2,4-dinitrotoluene dioxygenase (DNTDO) multicomponent enzyme system is composed of an electron transfer component and a dioxygenase component (iron sulfur protein (ISP)). The electron transfer component is composed of a ferredoxin reductase (DntAa) and a ferredoxin (DntAb), and the dioxygenase component is formed of a large alpha subunit (DntAc) and a small beta subunit (DntAd).

In terms of biological role, component of the 2,4-dinitrotoluene dioxygenase (DNTDO) multicomponent enzyme system which catalyzes the incorporation of both atoms of molecular oxygen into 2,4-dinitrotoluene (DNT) to form 4-methyl-5-nitrocatechol (MNC) and nitrite. The beta subunit seems to have a structural role in the holoenzyme. Also able to convert naphthalene to cis-(1R,2S)-dihydroxy-1,2-dihydronaphthalene. In Burkholderia sp. (strain RASC), this protein is 2,4-dinitrotoluene dioxygenase system, small oxygenase component.